The sequence spans 240 residues: 3-deoxy-D-manno-octulosonic acid kinase (240 aa).

Residue Asp170 is part of the active site.

The protein belongs to the protein kinase superfamily. KdkA/RfaP family.

The protein resides in the cell inner membrane. The enzyme catalyses an alpha-Kdo-(2-&gt;6)-lipid IVA + ATP = a 4-O-phospho-alpha-Kdo-(2-&gt;6)-lipid IVA + ADP + H(+). The protein operates within bacterial outer membrane biogenesis; LPS core biosynthesis. Catalyzes the ATP-dependent phosphorylation of the 3-deoxy-D-manno-octulosonic acid (Kdo) residue in Kdo-lipid IV(A) at the 4-OH position. This is 3-deoxy-D-manno-octulosonic acid kinase from Mannheimia succiniciproducens (strain KCTC 0769BP / MBEL55E).